Reading from the N-terminus, the 692-residue chain is MARLVPLEKTRNIGIMAHIDAGKTTTTERILYYTGVTHKIGEVHEGAATMDWMEQEQERGITITSAATTCNWGDHRINIIDTPGHVDFTIEVERSLRVLDGAVAVFCSVGGVEPQSETVWRQADKYGVPRIAFVNKMDRVGADFFRGVSMIRDRLKANPVPIQLPIGAEDTFKGVVDLVEMKAIVWDEESLGAKFHVEEIPADLQELAQEYHEKMVEEISSHDDALMEKYLGGEELTVDEVRAAIRNATIAIQICPVICGSSFKNKGVQNLLDSVVEYLPSPVDIPAIKGVDADSGAEIERKAADSEPFAALAFKIMTDPFVGQLCFIRVYSGVLNSGSYVYNSTKGKKERIGRLLKMHANKREEIKEVLAGDIAAAVGLKYTTTGDTLCPEDAPVILESIEFPEPVIAIAIEPKTKADQEKLGISLQKLASEDPSFRVRTDEETGQTIISGMGELHLEIIVDRLMREFKVEANVGKPQVAYRETVTKKVKVEGKFVRQSGGRGQYGHVWIEMEPQEPGKGYEFVDAIKGGVVPREYIPAVDKGIQEAMDTGVLAGFPCVDFKVSLVDGSYHEVDSSEMAFKIAGSMAFKEAAAKASPVLLEPIMSVEVVVPEEYMGDVIGDLNSRRGRIMGMEGRAGAQVVSAMVPLAQMFGYATDLRSATQGRATYTMTFDHYEQVPKSVSEEIIAKVKG.

A tr-type G domain is found at 8–283 (EKTRNIGIMA…SVVEYLPSPV (276 aa)). GTP contacts are provided by residues 17–24 (AHIDAGKT), 81–85 (DTPGH), and 135–138 (NKMD).

The protein belongs to the TRAFAC class translation factor GTPase superfamily. Classic translation factor GTPase family. EF-G/EF-2 subfamily.

The protein resides in the cytoplasm. Functionally, catalyzes the GTP-dependent ribosomal translocation step during translation elongation. During this step, the ribosome changes from the pre-translocational (PRE) to the post-translocational (POST) state as the newly formed A-site-bound peptidyl-tRNA and P-site-bound deacylated tRNA move to the P and E sites, respectively. Catalyzes the coordinated movement of the two tRNA molecules, the mRNA and conformational changes in the ribosome. In Geobacter metallireducens (strain ATCC 53774 / DSM 7210 / GS-15), this protein is Elongation factor G 1.